We begin with the raw amino-acid sequence, 1431 residues long: Trophinin (1431 aa).

Disordered regions lie at residues 1 to 24 (MDRR…PGSL), 341 to 365 (SRAR…QGAQ), and 401 to 433 (PTTR…PWGR). The segment covering 405–415 (TRGKRNRKSKH) has biased composition (basic residues). An MAGE domain is found at 444 to 642 (LQERANKLVK…KDWAVQYREA (199 aa)). 2 repeat units span residues 751 to 760 (FSGGPGITFG) and 769 to 778 (FSNTASISFG). Residues 751-1430 (FSGGPGITFG…ASLGACGFSY (680 aa)) form a 62 X 10 AA approximate tandem repeats region. Residues 779 to 786 (GTLSTSSS) form a 3; approximate repeat. A run of 2 repeats spans residues 787–796 (FSSAASISFG) and 805–814 (FSSEASISFG). One copy of the 6; approximate repeat lies at 823–833 (FSGGVSSSFSG). Residues 841–850 (FSGGASSGFG) form repeat 7. One copy of the 8; approximate repeat lies at 859–870 (FSGVLSTSTSFG). One copy of the 9; approximate repeat lies at 879 to 890 (FSSALSTSTGFG). 5 repeat units span residues 901–910 (GSPSSSGSFG), 911–920 (GTLSTSICFG), 921–930 (GSPCTSTGFG), 931–940 (GTLSTSVSFG), and 941–950 (GSSSTSANFG). A 15; approximate repeat occupies 951-960 (GTLSTSICFD). A run of 6 repeats spans residues 961 to 970 (GSPSTGAGFG), 971 to 980 (GALNTSASFG), 981 to 990 (SVLNTSTGFG), 991 to 1000 (GAMSTSADFG), 1001 to 1010 (GTLSTSVCFG), and 1011 to 1020 (GSPGTSVSFG). A 22; approximate repeat occupies 1021 to 1030 (SALNTNAGYG). A run of 4 repeats spans residues 1031–1040 (GAVSTNTDFG), 1041–1050 (GTLSTSVCFG), 1051–1060 (GSPSTSAGFG), and 1061–1070 (GALNTNASFG). A 27; approximate repeat occupies 1071–1080 (CAVSTSASFS). Residues 1081 to 1090 (GAVSTSACFS) form a 28; approximate repeat. A run of 8 repeats spans residues 1091-1100 (GAPITNPGFG), 1101-1110 (GAFSTSAGFG), 1111-1120 (GALSTAADFG), 1121-1130 (GTPSNSIGFG), 1131-1140 (AAPSTSVSFG), 1141-1150 (GAHGTSLCFG), 1151-1160 (GAPSTSLCFG), and 1161-1170 (SASNTNLCFG). A 37; approximate repeat occupies 1171–1180 (GPPSTSACFS). The stretch at 1181 to 1190 (GATSPSFCDG) is one 38; approximate repeat. 3 repeat units span residues 1191-1200 (PSTSTGFSFG), 1201-1210 (NGLSTNAGFG), and 1211-1220 (GGLNTSAGFG). Residues 1221–1230 (GGLGTSAGFS) form a 42; approximate repeat. A 43; approximate repeat occupies 1231 to 1240 (GGLSTSSGFD). 2 tandem repeats follow at residues 1241 to 1250 (GGLGTSAGFG) and 1251 to 1260 (GGPGTSTGFG). The 46; approximate repeat unit spans residues 1261 to 1270 (GGLGTSAGFS). 3 consecutive repeat copies span residues 1271–1280 (GGLGTSAGFG), 1281–1290 (GGLVTSDGFG), and 1291–1300 (GGLGTNASFG). A 50; approximate repeat occupies 1301–1310 (STLGTSAGFS). Repeat 51 spans residues 1311–1320 (GGLSTSDGFG). One copy of the 52; approximate repeat lies at 1321-1330 (SRPNASFDRG). A 53; approximate repeat occupies 1331–1340 (LSTIIGFGSG). The 54; approximate repeat unit spans residues 1341–1350 (SNTSTGFTGE). A compositionally biased stretch (low complexity) spans 1342-1363 (NTSTGFTGEPSTSTGFSSGPSS). The disordered stretch occupies residues 1342–1365 (NTSTGFTGEPSTSTGFSSGPSSIV). Residues 1351–1360 (PSTSTGFSSG) form a 55; approximate repeat. One copy of the 56; approximate repeat lies at 1361-1370 (PSSIVGFSGG). A 57; approximate repeat occupies 1371–1380 (PSTGVGFCSG). Residues 1381 to 1390 (PSTSGFSGGP) form a 58; approximate repeat. The 59; approximate repeat unit spans residues 1391-1400 (STGAGFGGGP). The stretch at 1401–1410 (NTGAGFGGGP) is one 60; approximate repeat. A 61; approximate repeat occupies 1411 to 1420 (STSAGFGSGA). A 62; approximate repeat occupies 1421-1430 (ASLGACGFSY).

Directly binds bystin, and indirectly tastin. In terms of tissue distribution, strong expression at implantation sites. Found in the placenta from the sixth week of pregnancy. Was localized in the cytoplasm of the syncytiotrophoblast in the chorionic villi and in endometrial decidual cells at the uteroplacental interface. After week 10, the level decreased and then disappeared from placental villi. Also found in macrophages.

Functionally, could be involved with bystin and tastin in a cell adhesion molecule complex that mediates an initial attachment of the blastocyst to uterine epithelial cells at the time of the embryo implantation. Directly responsible for homophilic cell adhesion. The chain is Trophinin (TRO) from Homo sapiens (Human).